The following is an 85-amino-acid chain: uncharacterized protein (85 aa).

This sequence belongs to the YciI family.

This is an uncharacterized protein from Bacillus subtilis (strain 168).